The sequence spans 188 residues: Adenine phosphoribosyltransferase (188 aa).

The protein belongs to the purine/pyrimidine phosphoribosyltransferase family. Homodimer.

The protein resides in the cytoplasm. The enzyme catalyses AMP + diphosphate = 5-phospho-alpha-D-ribose 1-diphosphate + adenine. The protein operates within purine metabolism; AMP biosynthesis via salvage pathway; AMP from adenine: step 1/1. In terms of biological role, catalyzes a salvage reaction resulting in the formation of AMP, that is energically less costly than de novo synthesis. This chain is Adenine phosphoribosyltransferase, found in Burkholderia lata (strain ATCC 17760 / DSM 23089 / LMG 22485 / NCIMB 9086 / R18194 / 383).